The following is a 932-amino-acid chain: MTEFLPFVARHIGPRHEDERAMLAALGLPSMETLITQAVPAPIRLNRALNLPAALSEADALAELGTIMGRNVVKKSFIGAGYHGVHTPPVIQRNLFENPAWYTAYTPYQSEISQGRLELLFHFQTLVAELTGLPVACASLLDEATAVAEAIGVACRHHRDKRSRILLAGELHPQTVDVVNTRAEPLGWEIATGSDVDDNTAAIVVPWPDTRGVYGDFAKVIADAKAKGALVIAVADPLALTIMEAPARWGADMAVGSMQRYGVPMGFGGPHAAYLAVSEALTRIIPGRIVGQSVDAHGRAAYRLALQTREQHIRRDKATSNICTAQALLANMAAAFAIWHGPAGLQAIATRVAALAARFAAALKAAGVEIAGESLFDTVTAKVPGKAAAIAAEADKGGRLIRIIDADTVGVTFDETSTEEDLTALASLFGAKPVGGDTVLVPGKERGEGFLTQEVFHSHRSETEMMRFLRRLADKDLALDRAMIPLGSCTMKLNAAAEMMPVSWNTVANLHPFAPAEQVQGYAKMTSDLEAWLCEITGFAGVSLQPNAGSQGEYAGLMAIRHYHQARGQGHRNICLIPSSAHGTNPASASMAGMSVVVVNCRPDGDIDIDDLKAKAEKHRDNLAAFMITYPSTYGVFEEGIKAFCEIVHDNGGQVYFDGANLNALVGLARPADIGADVCHMNLHKTFCIPHGGGGPGVGPIGVAKHLVPYLPGHVEAGSEHAVAAAQFGSASILVITWMYIRMMGGAGLKKATEAAILNANYIAHRLKGVYPILYTGAHDRVAHECIVDTRVLKDSAGITVEDVAKRLIDYGFHAPTMSWPVAGTLMIEPTESEPKLEIDRLCDAMIAIAGEAKKVADGVWPADDNPLANAPHTASDTLATEWKHPYTREEAVFPGGAFDPTAKYWPPVSRVDNVGGDRNLICSCPPVATYG.

N6-(pyridoxal phosphate)lysine is present on Lys685.

The protein belongs to the GcvP family. As to quaternary structure, the glycine cleavage system is composed of four proteins: P, T, L and H. Requires pyridoxal 5'-phosphate as cofactor.

It carries out the reaction N(6)-[(R)-lipoyl]-L-lysyl-[glycine-cleavage complex H protein] + glycine + H(+) = N(6)-[(R)-S(8)-aminomethyldihydrolipoyl]-L-lysyl-[glycine-cleavage complex H protein] + CO2. In terms of biological role, the glycine cleavage system catalyzes the degradation of glycine. The P protein binds the alpha-amino group of glycine through its pyridoxal phosphate cofactor; CO(2) is released and the remaining methylamine moiety is then transferred to the lipoamide cofactor of the H protein. In Brucella abortus (strain S19), this protein is Glycine dehydrogenase (decarboxylating).